We begin with the raw amino-acid sequence, 484 residues long: Chromosomal replication initiator protein DnaA (484 aa).

The segment at 1–73 is domain I, interacts with DnaA modulators; sequence MQEGKNIWSL…EILTEKGHNT (73 aa). Residues 73 to 140 are domain II; it reads TINVEFINPP…EDIHTKYRNP (68 aa). Positions 141–357 are domain III, AAA+ region; the sequence is FLKKKYTFEN…AAVTKLKAHI (217 aa). Residues G185, G187, K188, and T189 each contribute to the ATP site. Residues 358-484 form a domain IV, binds dsDNA region; the sequence is DLEDIEIDTS…IELMNKINKN (127 aa).

The protein belongs to the DnaA family. In terms of assembly, oligomerizes as a right-handed, spiral filament on DNA at oriC.

Its subcellular location is the cytoplasm. Plays an essential role in the initiation and regulation of chromosomal replication. ATP-DnaA binds to the origin of replication (oriC) to initiate formation of the DNA replication initiation complex once per cell cycle. Binds the DnaA box (a 9 base pair repeat at the origin) and separates the double-stranded (ds)DNA. Forms a right-handed helical filament on oriC DNA; dsDNA binds to the exterior of the filament while single-stranded (ss)DNA is stabiized in the filament's interior. The ATP-DnaA-oriC complex binds and stabilizes one strand of the AT-rich DNA unwinding element (DUE), permitting loading of DNA polymerase. After initiation quickly degrades to an ADP-DnaA complex that is not apt for DNA replication. Binds acidic phospholipids. In Borrelia turicatae (strain 91E135), this protein is Chromosomal replication initiator protein DnaA.